The chain runs to 506 residues: Dual specificity protein kinase shkC (506 aa).

A disordered region spans residues 1-21 (MDSGLGSSYPEERSGPPEIRP). A compositionally biased stretch (basic and acidic residues) spans 10 to 21 (PEERSGPPEIRP). In terms of domain architecture, Protein kinase spans 24 to 284 (INFEELIGTG…IISALDHVII (261 aa)). Residues 30–38 (IGTGSFGKV) and lysine 51 each bind ATP. Aspartate 147 serves as the catalytic Proton acceptor. The SH2 domain maps to 396–488 (WFHGDLDTTE…KLDSQLGVPN (93 aa)).

Belongs to the protein kinase superfamily. TKL Ser/Thr protein kinase family. SH2 domain-containing protein kinase subfamily.

The protein resides in the membrane. It catalyses the reaction L-seryl-[protein] + ATP = O-phospho-L-seryl-[protein] + ADP + H(+). The enzyme catalyses L-threonyl-[protein] + ATP = O-phospho-L-threonyl-[protein] + ADP + H(+). In terms of biological role, required for proper chemotaxis and phagocytosis; proper spatiotemporal control of F-actin levels in chemotaxing cells. Negative regulator of the PI3K (phosphatidylinositol 3 kinase) pathway. Predominantly phosphorylates serines and threonines and tyrosines at a lower level. This is Dual specificity protein kinase shkC (shkC) from Dictyostelium discoideum (Social amoeba).